A 297-amino-acid polypeptide reads, in one-letter code: Phosphoribosylaminoimidazole-succinocarboxamide synthase (297 aa).

Belongs to the SAICAR synthetase family.

The enzyme catalyses 5-amino-1-(5-phospho-D-ribosyl)imidazole-4-carboxylate + L-aspartate + ATP = (2S)-2-[5-amino-1-(5-phospho-beta-D-ribosyl)imidazole-4-carboxamido]succinate + ADP + phosphate + 2 H(+). The protein operates within purine metabolism; IMP biosynthesis via de novo pathway; 5-amino-1-(5-phospho-D-ribosyl)imidazole-4-carboxamide from 5-amino-1-(5-phospho-D-ribosyl)imidazole-4-carboxylate: step 1/2. This chain is Phosphoribosylaminoimidazole-succinocarboxamide synthase, found in Corynebacterium glutamicum (strain ATCC 13032 / DSM 20300 / JCM 1318 / BCRC 11384 / CCUG 27702 / LMG 3730 / NBRC 12168 / NCIMB 10025 / NRRL B-2784 / 534).